We begin with the raw amino-acid sequence, 565 residues long: Thiol:disulfide interchange protein DsbD (565 aa).

Residues 1–19 (MAQRIFTLILLLCSTSVFA) form the signal peptide. Residues 20 to 162 (GLFDAPGRSQ…VPQQEQPTAQ (143 aa)) are Periplasmic-facing. 2 disulfides stabilise this stretch: Cys122–Cys128 and Cys182–Cys304. A helical membrane pass occupies residues 163-183 (LPFSALWALLIGIGIAFTPCV). Over 184 to 207 (LPMYPLISGIVLGGKQRLSTARAL) the chain is Cytoplasmic. Residues 208-228 (LLTFIYVQGMALTYTALGLVV) traverse the membrane as a helical segment. At 229-242 (AAAGLQFQAALQHP) the chain is on the periplasmic side. Residues 243-263 (YVLIGLTIVFTLLAMSMFGLL) traverse the membrane as a helical segment. Residues 264-295 (TLQLPSSLQTRLTLMSNRQQGGSPGGVFIMGT) lie on the Cytoplasmic side of the membrane. Residues 296 to 316 (IAGLICSPCTTAPLSAILLYI) traverse the membrane as a helical segment. The Periplasmic segment spans residues 317-322 (AQSGNM). A helical transmembrane segment spans residues 323–343 (WLGGGTLYLYALGMGLPLMLI). Over 344–356 (TVFGNRLLPKSGP) the chain is Cytoplasmic. The helical transmembrane segment at 357–377 (WMEQVKTAFGFVILALPVFLL) threads the bilayer. Residues 378–383 (ERVIGD) are Periplasmic-facing. Residues 384-404 (VWGLRLWSALGVAFFGWAFIT) form a helical membrane-spanning segment. The Cytoplasmic segment spans residues 405–417 (SLQAKRGWMRVVQ). A helical transmembrane segment spans residues 418–438 (IILLAAALVSVRPLQDWAFGA). Residues 434-565 (WAFGATHTAQ…FSAHLRDRQP (132 aa)) enclose the Thioredoxin domain. Over 439-565 (THTAQTQTHL…FSAHLRDRQP (127 aa)) the chain is Periplasmic. Cysteines 480 and 483 form a disulfide.

Belongs to the thioredoxin family. DsbD subfamily.

Its subcellular location is the cell inner membrane. It catalyses the reaction [protein]-dithiol + NAD(+) = [protein]-disulfide + NADH + H(+). It carries out the reaction [protein]-dithiol + NADP(+) = [protein]-disulfide + NADPH + H(+). Required to facilitate the formation of correct disulfide bonds in some periplasmic proteins and for the assembly of the periplasmic c-type cytochromes. Acts by transferring electrons from cytoplasmic thioredoxin to the periplasm. This transfer involves a cascade of disulfide bond formation and reduction steps. This Escherichia coli O157:H7 protein is Thiol:disulfide interchange protein DsbD.